A 595-amino-acid chain; its full sequence is MDVRRRSEKPVYPSKVFGADEKPLKPHNNQQQEDNNTLLIDASDALPLPLYLTNGLFFTMFFSVMYFLLSRWREKIRNSTPLHVVTLSELGAIVSLIASVIYLLGFFGIGFVQTFVSRGNNDSWDENDEEFLLKEDSRCGPATTLGCAIPAPPARQISPMAPPQPAMSMVEKPSPLITPASSEEDEEIINSVVQGKFPSYSLVIQLGDVSAAASLRKEVMQRITGKSLEGLPLEGFTYESILGQCCEMPIGYVQIPVGIAGPLLLNGKEFSVPMATTEGCLVASTNRGCKAIYASGGATCIVLRDGMTRAPCVRFGTAKRAAELKFFVEDPIKFETLANVFNQSSRFGRLQRIQCAIAGKNLYMRFVCSTGDAMGMNMVSKGVQNVLDYLQNEYPDMDVIGISGNFCSDKKPAAVNWIEGRGKSVVCEAIITEEVVKKVLKTEVAALVELNMLKNLTGSAMAGALGGFNAHASNIVSAVFIATGQDPAQNIESSHCITMMEAVNDGKDLHISVTMPSIEVGTVGGGTQLASQSACLNLLGVKGANREAPGSNARLLATVVAGSVLAGELSLMSAISAGQLVNSHMKYNRSTKASS.

An N-linked (GlcNAc...) asparagine glycan is attached at N35. 2 consecutive transmembrane segments (helical) span residues 48–68 (LPLY…MYFL) and 92–112 (AIVS…IGFV). The segment at 113 to 183 (QTFVSRGNND…SPLITPASSE (71 aa)) is linker. N121 carries an N-linked (GlcNAc...) asparagine glycan. Residues 184–595 (EDEEIINSVV…KYNRSTKASS (412 aa)) form a catalytic region. Residue E278 is the Charge relay system of the active site. An N-linked (GlcNAc...) asparagine glycan is attached at N342. Catalysis depends on K410, which acts as the Charge relay system. N-linked (GlcNAc...) asparagine glycosylation occurs at N455. Residue D486 is the Charge relay system of the active site. Catalysis depends on H584, which acts as the Proton donor. N588 carries an N-linked (GlcNAc...) asparagine glycan.

It belongs to the HMG-CoA reductase family. As to expression, expressed in young flowers and in mature sepals and ovaries.

It is found in the endoplasmic reticulum membrane. It carries out the reaction (R)-mevalonate + 2 NADP(+) + CoA = (3S)-3-hydroxy-3-methylglutaryl-CoA + 2 NADPH + 2 H(+). Its pathway is metabolic intermediate biosynthesis; (R)-mevalonate biosynthesis; (R)-mevalonate from acetyl-CoA: step 3/3. Its function is as follows. Catalyzes the synthesis of mevalonate. The specific precursor of all isoprenoid compounds present in plants. The chain is 3-hydroxy-3-methylglutaryl-coenzyme A reductase 2 (HMG2) from Solanum tuberosum (Potato).